We begin with the raw amino-acid sequence, 179 residues long: Large ribosomal subunit protein uL6 (179 aa).

Belongs to the universal ribosomal protein uL6 family. Part of the 50S ribosomal subunit.

Functionally, this protein binds to the 23S rRNA, and is important in its secondary structure. It is located near the subunit interface in the base of the L7/L12 stalk, and near the tRNA binding site of the peptidyltransferase center. This Acaryochloris marina (strain MBIC 11017) protein is Large ribosomal subunit protein uL6.